The following is a 544-amino-acid chain: Glutamyl-tRNA(Gln) amidotransferase subunit B, chloroplastic/mitochondrial (544 aa).

This sequence belongs to the GatB/GatE family. GatB subfamily. In terms of assembly, subunit of the heterotrimeric GatCAB amidotransferase (AdT) complex, composed of A, B and C subunits.

Its subcellular location is the mitochondrion. The protein localises to the plastid. The protein resides in the chloroplast. The catalysed reaction is L-glutamyl-tRNA(Gln) + L-glutamine + ATP + H2O = L-glutaminyl-tRNA(Gln) + L-glutamate + ADP + phosphate + H(+). In terms of biological role, allows the formation of correctly charged Gln-tRNA(Gln) through the transamidation of misacylated Glu-tRNA(Gln) in chloroplasts and mitochondria. The reaction takes place in the presence of glutamine and ATP through an activated gamma-phospho-Glu-tRNA(Gln). This chain is Glutamyl-tRNA(Gln) amidotransferase subunit B, chloroplastic/mitochondrial, found in Oryza sativa subsp. japonica (Rice).